The following is a 225-amino-acid chain: Alpha-tubulin N-acetyltransferase 1 (225 aa).

The N-acetyltransferase domain maps to 1-190; that stretch reads MEFPFDVDAL…NNFVIFEGFF (190 aa). Lysine 56 is subject to N6-acetyllysine; by autocatalysis. Position 124–137 (124–137) interacts with acetyl-CoA; it reads FYIHESLQRHGHGR. An N6-acetyllysine; by autocatalysis modification is found at lysine 146. 160-169 contributes to the acetyl-CoA binding site; sequence SQKLLKFLNK. Residues 195–225 form a disordered region; it reads PPARKLPPKRAEGDIKPYSSSDRESGLPQGW. Basic and acidic residues predominate over residues 203–219; it reads KRAEGDIKPYSSSDRES. At lysine 210 the chain carries N6-acetyllysine; by autocatalysis.

It belongs to the acetyltransferase ATAT1 family. Component of the BBSome complex. Interacts with AP2 alpha-adaptins, including AP2A2, but not with AP1 gamma-adaptin (AP1G1/AP1G2); this interaction is required for efficient alpha-tubulin acetylation, hence clathrin-coated pits are sites of microtubule acetylation. In terms of processing, autoacetylation strongly increases tubulin acetylation.

It is found in the cytoplasm. The protein resides in the membrane. Its subcellular location is the clathrin-coated pit. It localises to the cell junction. The protein localises to the focal adhesion. It is found in the cell projection. The protein resides in the axon. Its subcellular location is the cytoskeleton. It localises to the spindle. It carries out the reaction L-lysyl-[alpha-tubulin] + acetyl-CoA = N(6)-acetyl-L-lysyl-[alpha-tubulin] + CoA + H(+). Functionally, specifically acetylates 'Lys-40' in alpha-tubulin on the lumenal side of microtubules. Promotes microtubule destabilization and accelerates microtubule dynamics; this activity may be independent of acetylation activity. Acetylates alpha-tubulin with a slow enzymatic rate, due to a catalytic site that is not optimized for acetyl transfer. Enters the microtubule through each end and diffuses quickly throughout the lumen of microtubules. Acetylates only long/old microtubules because of its slow acetylation rate since it does not have time to act on dynamically unstable microtubules before the enzyme is released. Required for normal sperm flagellar function. Promotes directional cell locomotion and chemotaxis, through AP2A2-dependent acetylation of alpha-tubulin at clathrin-coated pits that are concentrated at the leading edge of migrating cells. May facilitate primary cilium assembly. This chain is Alpha-tubulin N-acetyltransferase 1, found in Bos taurus (Bovine).